Reading from the N-terminus, the 40-residue chain is Esterase-4 (40 aa).

Belongs to the type-B carboxylesterase/lipase family.

It carries out the reaction a carboxylic ester + H2O = an alcohol + a carboxylate + H(+). The polypeptide is Esterase-4 (Est-4) (Drosophila mojavensis (Fruit fly)).